A 655-amino-acid chain; its full sequence is D-xylonate dehydratase YagF (655 aa).

It belongs to the IlvD/Edd family.

It catalyses the reaction D-xylonate = 2-dehydro-3-deoxy-D-arabinonate + H2O. Catalyzes the dehydration of D-xylonic acid to form 2-dehydro-3-deoxy-D-pentonate. This chain is D-xylonate dehydratase YagF (yagF), found in Escherichia coli (strain K12).